Reading from the N-terminus, the 442-residue chain is L-seryl-tRNA(Sec) selenium transferase (442 aa).

At K284 the chain carries N6-(pyridoxal phosphate)lysine.

This sequence belongs to the SelA family. Requires pyridoxal 5'-phosphate as cofactor.

Its subcellular location is the cytoplasm. It catalyses the reaction L-seryl-tRNA(Sec) + selenophosphate + H(+) = L-selenocysteinyl-tRNA(Sec) + phosphate. It participates in aminoacyl-tRNA biosynthesis; selenocysteinyl-tRNA(Sec) biosynthesis; selenocysteinyl-tRNA(Sec) from L-seryl-tRNA(Sec) (bacterial route): step 1/1. Converts seryl-tRNA(Sec) to selenocysteinyl-tRNA(Sec) required for selenoprotein biosynthesis. The chain is L-seryl-tRNA(Sec) selenium transferase from Campylobacter fetus subsp. fetus (strain 82-40).